Reading from the N-terminus, the 222-residue chain is Transmembrane reductase CYB561D2 (222 aa).

At 2–17 (ALSVETESHIYRALRT) the chain is on the cytoplasmic side. A Cytochrome b561 domain is found at 14–217 (ALRTVSGAAA…NQVSNAYLYR (204 aa)). Residues 18-38 (VSGAAAHLVALGFTIFVAVLA) form a helical membrane-spanning segment. The Lumenal segment spans residues 39 to 46 (RPGSSLFS). Residues 47–67 (WHPVLMSLAFSFLMTEALLVF) form a helical membrane-spanning segment. Position 48 (H48) interacts with heme b. Topologically, residues 68-85 (SPESSLLRSLSRKGRARC) are cytoplasmic. Positions 86 and 120 each coordinate heme b. A helical transmembrane segment spans residues 86–106 (HWVLQLLALLCALLGLGLVIL). At 107–122 (HKEQLGKAHLATWHGR) the chain is on the lumenal side. Residues 123–143 (AGLLAVLWAGLQCSGGVGLLY) form a helical membrane-spanning segment. The Cytoplasmic portion of the chain corresponds to 144-162 (PKLLPRWPLAKLKLYHATS). Heme b is bound at residue H159. A helical transmembrane segment spans residues 163-183 (GLVGYLLGGASLLLGMCSLWF). Over 184 to 186 (TAT) the chain is Lumenal. The chain crosses the membrane as a helical span at residues 187 to 207 (VTGGVWYLAVLCPVITSLVIM). The Cytoplasmic segment spans residues 208-222 (NQVSNAYLYRKRIQP).

Heme b serves as cofactor.

The protein resides in the endoplasmic reticulum membrane. It is found in the cytoplasmic vesicle membrane. The enzyme catalyses monodehydro-L-ascorbate radical(out) + L-ascorbate(in) = monodehydro-L-ascorbate radical(in) + L-ascorbate(out). It catalyses the reaction Fe(3+)(out) + L-ascorbate(in) = monodehydro-L-ascorbate radical(in) + Fe(2+)(out) + H(+). Functionally, transmembrane reductase that may use ascorbate as an electron donor in the cytoplasm and transfer electrons across endoplasmic reticulum membranes to reduce monodehydro-L-ascorbate radical and iron cations Fe(3+) in the lumen of that compartment. This is Transmembrane reductase CYB561D2 from Bos taurus (Bovine).